The primary structure comprises 220 residues: Putative threonylcarbamoyl-AMP synthase (220 aa).

Positions A17–V202 constitute a YrdC-like domain.

Belongs to the SUA5 family.

It is found in the cytoplasm. It catalyses the reaction L-threonine + hydrogencarbonate + ATP = L-threonylcarbamoyladenylate + diphosphate + H2O. Its function is as follows. Required for the formation of a threonylcarbamoyl group on adenosine at position 37 (t(6)A37) in tRNAs that read codons beginning with adenine. Catalyzes the conversion of L-threonine, HCO(3)(-)/CO(2) and ATP to give threonylcarbamoyl-AMP (TC-AMP) as the acyladenylate intermediate, with the release of diphosphate. The chain is Putative threonylcarbamoyl-AMP synthase from Mycobacterium leprae (strain TN).